The primary structure comprises 403 residues: Glucose/galactose-binding lipoprotein (403 aa).

An N-terminal signal peptide occupies residues 1-25; sequence MKENSCTACSRRLALFVGAAVLVVG. Cys-26 is lipidated: N-palmitoyl cysteine. Cys-26 carries S-diacylglycerol cysteine lipidation.

Belongs to the bacterial solute-binding protein 2 family.

It localises to the cell membrane. Functionally, may be involved in the transport of sugars. May have a role in chemotaxis. The sequence is that of Glucose/galactose-binding lipoprotein (mglB) from Treponema pallidum (strain Nichols).